The following is a 398-amino-acid chain: Lipoyl synthase, mitochondrial (398 aa).

The transit peptide at 1–32 (MIALRVHNTRVVSRSLTVWTRPSPTLTLSRSL) directs the protein to the mitochondrion. [4Fe-4S] cluster is bound by residues Cys117, Cys122, Cys128, Cys147, Cys151, Cys154, and Ser362. The Radical SAM core domain occupies 132-351 (KKSEATATIM…RDTALEMGFL (220 aa)).

The protein belongs to the radical SAM superfamily. Lipoyl synthase family. [4Fe-4S] cluster is required as a cofactor.

It localises to the mitochondrion. The catalysed reaction is [[Fe-S] cluster scaffold protein carrying a second [4Fe-4S](2+) cluster] + N(6)-octanoyl-L-lysyl-[protein] + 2 oxidized [2Fe-2S]-[ferredoxin] + 2 S-adenosyl-L-methionine + 4 H(+) = [[Fe-S] cluster scaffold protein] + N(6)-[(R)-dihydrolipoyl]-L-lysyl-[protein] + 4 Fe(3+) + 2 hydrogen sulfide + 2 5'-deoxyadenosine + 2 L-methionine + 2 reduced [2Fe-2S]-[ferredoxin]. Its pathway is protein modification; protein lipoylation via endogenous pathway; protein N(6)-(lipoyl)lysine from octanoyl-[acyl-carrier-protein]: step 2/2. Functionally, catalyzes the radical-mediated insertion of two sulfur atoms into the C-6 and C-8 positions of the octanoyl moiety bound to the lipoyl domains of lipoate-dependent enzymes, thereby converting the octanoylated domains into lipoylated derivatives. In Scheffersomyces stipitis (strain ATCC 58785 / CBS 6054 / NBRC 10063 / NRRL Y-11545) (Yeast), this protein is Lipoyl synthase, mitochondrial.